The primary structure comprises 612 residues: Dihydroxy-acid dehydratase (612 aa).

Aspartate 81 lines the Mg(2+) pocket. Cysteine 122 lines the [2Fe-2S] cluster pocket. Mg(2+) is bound by residues aspartate 123 and lysine 124. At lysine 124 the chain carries N6-carboxylysine. [2Fe-2S] cluster is bound at residue cysteine 193. Position 489 (glutamate 489) interacts with Mg(2+). Serine 515 (proton acceptor) is an active-site residue.

The protein belongs to the IlvD/Edd family. As to quaternary structure, homodimer. [2Fe-2S] cluster is required as a cofactor. The cofactor is Mg(2+).

It catalyses the reaction (2R)-2,3-dihydroxy-3-methylbutanoate = 3-methyl-2-oxobutanoate + H2O. It carries out the reaction (2R,3R)-2,3-dihydroxy-3-methylpentanoate = (S)-3-methyl-2-oxopentanoate + H2O. It participates in amino-acid biosynthesis; L-isoleucine biosynthesis; L-isoleucine from 2-oxobutanoate: step 3/4. The protein operates within amino-acid biosynthesis; L-valine biosynthesis; L-valine from pyruvate: step 3/4. Functionally, functions in the biosynthesis of branched-chain amino acids. Catalyzes the dehydration of (2R,3R)-2,3-dihydroxy-3-methylpentanoate (2,3-dihydroxy-3-methylvalerate) into 2-oxo-3-methylpentanoate (2-oxo-3-methylvalerate) and of (2R)-2,3-dihydroxy-3-methylbutanoate (2,3-dihydroxyisovalerate) into 2-oxo-3-methylbutanoate (2-oxoisovalerate), the penultimate precursor to L-isoleucine and L-valine, respectively. The chain is Dihydroxy-acid dehydratase from Azotobacter vinelandii (strain DJ / ATCC BAA-1303).